The sequence spans 188 residues: UPF0301 protein Tcr_1827 (188 aa).

The protein belongs to the UPF0301 (AlgH) family.

The chain is UPF0301 protein Tcr_1827 from Hydrogenovibrio crunogenus (strain DSM 25203 / XCL-2) (Thiomicrospira crunogena).